The sequence spans 201 residues: MSRYRRPRFKKIRRLGALPGLTSKRPKTGNDLKNQSRSGKKSQYRIRLEEKQKLRFHYGLTERQLLKYVRIAGKAKGSTGQVLLQLLEMRLDNILFRLGMASTIPQARQLVNHRHILVNGSIVDIPSYRCKPRDIITAKDEKKSRTLIQNYLDSSPPQELPKHLTLQPLQYKGLVNQIIDSKWVSLKINELLVVEYYSRQT.

Positions 15–44 (LGALPGLTSKRPKTGNDLKNQSRSGKKSQY) are disordered. One can recognise an S4 RNA-binding domain in the interval 89–150 (MRLDNILFRL…EKKSRTLIQN (62 aa)).

The protein belongs to the universal ribosomal protein uS4 family. In terms of assembly, part of the 30S ribosomal subunit. Contacts protein S5. The interaction surface between S4 and S5 is involved in control of translational fidelity.

It is found in the plastid. The protein resides in the chloroplast. In terms of biological role, one of the primary rRNA binding proteins, it binds directly to 16S rRNA where it nucleates assembly of the body of the 30S subunit. With S5 and S12 plays an important role in translational accuracy. In Cucumis sativus (Cucumber), this protein is Small ribosomal subunit protein uS4c (rps4).